Consider the following 175-residue polypeptide: Gamma-crystallin-1 (175 aa).

2 Beta/gamma crystallin 'Greek key' domains span residues 2-40 (GKIFFYEERNFQGRHYECGSDYSDLSSYFNRCNSIRVEG) and 41-83 (GNWI…RFLP). Residues 84–88 (NYQGQ) form a connecting peptide region. Beta/gamma crystallin 'Greek key' domains follow at residues 89 to 129 (YKMR…NVFD) and 130 to 172 (GHWM…RRVY).

Belongs to the beta/gamma-crystallin family. Monomer.

Its function is as follows. Crystallins are the dominant structural components of the vertebrate eye lens. The polypeptide is Gamma-crystallin-1 (cryg1) (Xenopus laevis (African clawed frog)).